A 255-amino-acid polypeptide reads, in one-letter code: Large ribosomal subunit protein uL4 (255 aa).

This sequence belongs to the universal ribosomal protein uL4 family. Part of the 50S ribosomal subunit.

One of the primary rRNA binding proteins, this protein initially binds near the 5'-end of the 23S rRNA. It is important during the early stages of 50S assembly. It makes multiple contacts with different domains of the 23S rRNA in the assembled 50S subunit and ribosome. In terms of biological role, forms part of the polypeptide exit tunnel. The protein is Large ribosomal subunit protein uL4 of Thermococcus onnurineus (strain NA1).